Reading from the N-terminus, the 105-residue chain is MAGRTVTRADLCEAVYQQVGLSRTESAQLVEMVLKEIADCLARGETVKLSSFGSFVVREKGERVGRNPKTGEEVPIEPRRVMVFKPSSILKHRINGTVGDGLDED.

The protein belongs to the bacterial histone-like protein family. Heterodimer of an alpha and a beta chain.

In terms of biological role, this protein is one of the two subunits of integration host factor, a specific DNA-binding protein that functions in genetic recombination as well as in transcriptional and translational control. This Xanthobacter autotrophicus (strain ATCC BAA-1158 / Py2) protein is Integration host factor subunit alpha.